A 283-amino-acid chain; its full sequence is ATP phosphoribosyltransferase (283 aa).

The protein belongs to the ATP phosphoribosyltransferase family. Long subfamily. Requires Mg(2+) as cofactor.

It localises to the cytoplasm. It catalyses the reaction 1-(5-phospho-beta-D-ribosyl)-ATP + diphosphate = 5-phospho-alpha-D-ribose 1-diphosphate + ATP. It participates in amino-acid biosynthesis; L-histidine biosynthesis; L-histidine from 5-phospho-alpha-D-ribose 1-diphosphate: step 1/9. Feedback inhibited by histidine. In terms of biological role, catalyzes the condensation of ATP and 5-phosphoribose 1-diphosphate to form N'-(5'-phosphoribosyl)-ATP (PR-ATP). Has a crucial role in the pathway because the rate of histidine biosynthesis seems to be controlled primarily by regulation of HisG enzymatic activity. This chain is ATP phosphoribosyltransferase, found in Bacteroides fragilis (strain ATCC 25285 / DSM 2151 / CCUG 4856 / JCM 11019 / LMG 10263 / NCTC 9343 / Onslow / VPI 2553 / EN-2).